An 88-amino-acid polypeptide reads, in one-letter code: Small ribosomal subunit protein uS15 (88 aa).

The protein belongs to the universal ribosomal protein uS15 family. Part of the 30S ribosomal subunit. Forms a bridge to the 50S subunit in the 70S ribosome, contacting the 23S rRNA.

In terms of biological role, one of the primary rRNA binding proteins, it binds directly to 16S rRNA where it helps nucleate assembly of the platform of the 30S subunit by binding and bridging several RNA helices of the 16S rRNA. Functionally, forms an intersubunit bridge (bridge B4) with the 23S rRNA of the 50S subunit in the ribosome. This Francisella tularensis subsp. holarctica (strain LVS) protein is Small ribosomal subunit protein uS15.